A 330-amino-acid polypeptide reads, in one-letter code: tRNA uridine(34) hydroxylase (330 aa).

The region spanning 123–217 (SDPEVILVDT…YLEEVKQEES (95 aa)) is the Rhodanese domain. C177 (cysteine persulfide intermediate) is an active-site residue.

The protein belongs to the TrhO family.

It catalyses the reaction uridine(34) in tRNA + AH2 + O2 = 5-hydroxyuridine(34) in tRNA + A + H2O. Functionally, catalyzes oxygen-dependent 5-hydroxyuridine (ho5U) modification at position 34 in tRNAs. The sequence is that of tRNA uridine(34) hydroxylase from Shewanella sp. (strain ANA-3).